Here is a 355-residue protein sequence, read N- to C-terminus: S-adenosylmethionine:tRNA ribosyltransferase-isomerase (355 aa).

It belongs to the QueA family. Monomer.

It is found in the cytoplasm. It catalyses the reaction 7-aminomethyl-7-carbaguanosine(34) in tRNA + S-adenosyl-L-methionine = epoxyqueuosine(34) in tRNA + adenine + L-methionine + 2 H(+). It functions in the pathway tRNA modification; tRNA-queuosine biosynthesis. In terms of biological role, transfers and isomerizes the ribose moiety from AdoMet to the 7-aminomethyl group of 7-deazaguanine (preQ1-tRNA) to give epoxyqueuosine (oQ-tRNA). This chain is S-adenosylmethionine:tRNA ribosyltransferase-isomerase, found in Burkholderia lata (strain ATCC 17760 / DSM 23089 / LMG 22485 / NCIMB 9086 / R18194 / 383).